The primary structure comprises 184 residues: Putative pre-16S rRNA nuclease (184 aa).

The tract at residues 1–23 (MFSSQHRLLYQPSGPDLSKNLDP) is disordered.

It belongs to the YqgF nuclease family.

It localises to the cytoplasm. In terms of biological role, could be a nuclease involved in processing of the 5'-end of pre-16S rRNA. The sequence is that of Putative pre-16S rRNA nuclease from Mycobacterium leprae (strain Br4923).